The following is a 241-amino-acid chain: Megakaryocyte and platelet inhibitory receptor G6b (241 aa).

A signal peptide spans 1–17; the sequence is MAVFLQLLPLLLSRAQG. At 18-142 the chain is on the extracellular side; sequence NPGASLDGRP…GPTHGSVYPQ (125 aa). The N-linked (GlcNAc...) asparagine glycan is linked to Asn32. A helical transmembrane segment spans residues 143-163; the sequence is LLIPLLGAGLVLGLGALGLVW. At 164–241 the chain is on the cytoplasmic side; the sequence is WLHRRLPPQP…DASTIYAVVV (78 aa). 2 short sequence motifs (ITIM motif) span residues 209–214 and 235–240; these read LLYADL and TIYAVV. Tyr211 is modified (phosphotyrosine).

In terms of assembly, interacts (via ITIM motif) with PTPN6 and PTPN11. Binds to heparin. All isoforms are N-glycosylated. Post-translationally, isoform E is O-glycosylated. In terms of processing, phosphorylated. As to expression, expressed in platelets. Expressed in a restricted set of hematopoietic cell lines including the erythroleukemia cell line K-562 and the T-cell leukemia cell lines MOLT-4 and Jurkat. Not detected in the monocyte-like cell line U-937, the B-cell-like cell line Raji, the fibroblast cell lines TK and HeLa, or the natural killer cell lines NKL, NK 62 and YT.

The protein localises to the endoplasmic reticulum. It localises to the golgi apparatus. The protein resides in the cell membrane. In terms of biological role, inhibitory receptor that acts as a critical regulator of hematopoietic lineage differentiation, megakaryocyte function and platelet production. Inhibits platelet aggregation and activation by agonists such as ADP and collagen-related peptide. This regulation of megakaryocate function as well as platelet production ann activation is done through the inhibition (via the 2 ITIM motifs) of the receptors CLEC1B and GP6:FcRgamma signaling. Appears to operate in a calcium-independent manner. Its function is as follows. Isoform B, displayed in this entry, is the only isoform to contain both a transmembrane region and 2 immunoreceptor tyrosine-based inhibitor motifs (ITIMs) and, thus, the only one which probably has a role of inhibitory receptor. Isoform A may be the activating counterpart of isoform B. The polypeptide is Megakaryocyte and platelet inhibitory receptor G6b (Homo sapiens (Human)).